Reading from the N-terminus, the 229-residue chain is Large ribosomal subunit protein uL1 (229 aa).

Belongs to the universal ribosomal protein uL1 family. In terms of assembly, part of the 50S ribosomal subunit.

Its function is as follows. Binds directly to 23S rRNA. The L1 stalk is quite mobile in the ribosome, and is involved in E site tRNA release. Functionally, protein L1 is also a translational repressor protein, it controls the translation of the L11 operon by binding to its mRNA. The protein is Large ribosomal subunit protein uL1 of Pasteurella multocida (strain Pm70).